Consider the following 408-residue polypeptide: uncharacterized protein (408 aa).

2 disordered regions span residues D184–F206 and N254–S317. Residues N187–F206 show a composition bias toward low complexity.

This is an uncharacterized protein from Dictyostelium discoideum (Social amoeba).